Here is a 161-residue protein sequence, read N- to C-terminus: Pathogenesis-related protein 1 (161 aa).

The N-terminal stretch at 1-26 (MKVTSYSRILIILAALVGALVVPLKA) is a signal peptide. The SCP domain occupies 34 to 149 (VNAHNQARSQ…NGGTIISCNY (116 aa)). 3 disulfide bridges follow: cysteine 70-cysteine 138, cysteine 113-cysteine 117, and cysteine 133-cysteine 147.

The protein belongs to the CRISP family. Expressed in flowers, stems and roots but not in leaves.

Its function is as follows. Probably involved in the defense reaction of plants against pathogens. This Arabidopsis thaliana (Mouse-ear cress) protein is Pathogenesis-related protein 1.